A 747-amino-acid chain; its full sequence is Probable copper-transporting ATPase PacS (747 aa).

The Cytoplasmic portion of the chain corresponds to 1 to 101 (MVNQQTLTLR…RQLAQRVWVS (101 aa)). In terms of domain architecture, HMA spans 3 to 69 (NQQTLTLRGM…AIEAAGYHAF (67 aa)). A metal cation is bound by residues C14 and C17. The helical transmembrane segment at 102-122 (GLIASLLVIGSLPMMLGISIP) threads the bilayer. The Extracellular segment spans residues 123 to 132 (GIPMWLHHPG). The helical transmembrane segment at 133-151 (LQLGLTLPVLWAGRSFFIN) threads the bilayer. The Cytoplasmic portion of the chain corresponds to 152-158 (AWKAFRQ). A helical transmembrane segment spans residues 159–179 (NTATMDTLVAVGTGAAFLYSL). The Extracellular portion of the chain corresponds to 180-199 (AVTLFPQWLTRQGLPPDVYY). The chain crosses the membrane as a helical span at residues 200-220 (EAIAVIIALLLLGRSLEERAK). Topologically, residues 221-348 (GQTSAAIRQL…KAPIQRLADQ (128 aa)) are cytoplasmic. A helical membrane pass occupies residues 349–371 (VTGWFVPAVIAIAILTFVLWFNW). At 372–378 (IGNVTLA) the chain is on the extracellular side. Residues 379-396 (LITAVGVLIIACPCALGL) traverse the membrane as a helical segment. At 397–688 (ATPTSIMVGT…QLSRATMTNI (292 aa)) the chain is on the cytoplasmic side. The 4-aspartylphosphate intermediate role is filled by D434. The Mg(2+) site is built by D634 and D638. The helical transmembrane segment at 689–708 (RQNLFFAFIYNVAGIPIAAG) threads the bilayer. Topologically, residues 709–720 (ILYPLLGWLLSP) are extracellular. Residues 721-739 (MLAGAAMAFSSVSVVTNAL) traverse the membrane as a helical segment. The Cytoplasmic portion of the chain corresponds to 740–747 (RLRQFQPR).

It belongs to the cation transport ATPase (P-type) (TC 3.A.3) family. Type IB subfamily.

It localises to the cell membrane. The enzyme catalyses Cu(+)(in) + ATP + H2O = Cu(+)(out) + ADP + phosphate + H(+). Its function is as follows. May play a role in the osmotic adaptation. The sequence is that of Probable copper-transporting ATPase PacS (pacS) from Synechococcus elongatus (strain ATCC 33912 / PCC 7942 / FACHB-805) (Anacystis nidulans R2).